Here is a 2493-residue protein sequence, read N- to C-terminus: Non-reducing polyketide synthase pkiA (2493 aa).

The N-terminal acylcarrier protein transacylase domain (SAT) stretch occupies residues 129-243; the sequence is PLLMMTHFVQ…VQYDENRATI (115 aa). Residue C160 is the Nucleophile; for transacylase activity of the active site. H274 (proton donor/acceptor; for transacylase activity) is an active-site residue. The Ketosynthase family 3 (KS3) domain occupies 401–818; it reads ETDIAIVGMA…GSNASMVITQ (418 aa). Residues C567, H702, and H741 each act as for beta-ketoacyl synthase activity in the active site. The tract at residues 926–1261 is malonyl-CoA:ACP transacylase (MAT); it reads CFGGQVGRSI…EYAPLLLPPY (336 aa). Positions 1259-1387 are N-terminal hotdog fold; that stretch reads PPYQFERTRH…AHISMHDVRC (129 aa). One can recognise a PKS/mFAS DH domain in the interval 1259–1562; sequence PPYQFERTRH…YSRVAKSLFT (304 aa). Catalysis depends on H1291, which acts as the Proton acceptor; for dehydratase activity. A product template (PT) domain region spans residues 1297-1558; it reads APIAPATLLL…LGLRYSRVAK (262 aa). The segment at 1415–1562 is C-terminal hotdog fold; it reads VDDILQGRNV…YSRVAKSLFT (148 aa). Residue D1471 is the Proton donor; for dehydratase activity of the active site. Residues 1588 to 1662 form the Carrier domain; sequence KDLVSRVKAV…DLVQAVQSAL (75 aa). S1622 carries the post-translational modification O-(pantetheine 4'-phosphoryl)serine. The interval 1822–2063 is methyltransferase (CMeT) domain; the sequence is REYPEYGGAS…YGHVDWTDGE (242 aa). The interval 2128–2366 is NADPH-binding domain; that stretch reads VTGATGSLGS…TPVDVAARII (239 aa).

Pantetheine 4'-phosphate is required as a cofactor.

The catalysed reaction is decanoyl-[ACP] + 4 malonyl-CoA + AH2 + S-adenosyl-L-methionine + 3 H(+) = 2,4-dihydroxy-3-methyl-6-(2-oxoundecyl)benzaldehyde + holo-[ACP] + A + S-adenosyl-L-homocysteine + 4 CO2 + 4 CoA + H2O. The protein operates within secondary metabolite biosynthesis. Its function is as follows. Non-reducing polyketide synthase; part of the pki gene cluster that mediates the biosynthesis of 2,4-dihydroxy-3-methyl-6-(2-oxoundecyl)benzaldehyde. The first step in the pathway is the generation of the decanoyl starter unit by the FAS composed of subunits pkiB and pkiC, which is then transferred directly from the FAS to the SAT domain of the non-reducing polyketide synthase pkiA. PkiA condenses the decanoyyl starter unit with 4 malonyl-CoA units and performs one methylation step to yield 2,4-dihydroxy-3-methyl-6-(2-oxoundecyl)benzaldehyde. The polypeptide is Non-reducing polyketide synthase pkiA (Emericella nidulans (strain FGSC A4 / ATCC 38163 / CBS 112.46 / NRRL 194 / M139) (Aspergillus nidulans)).